The chain runs to 313 residues: Carbamate kinase 2 (313 aa).

The protein belongs to the carbamate kinase family.

The protein localises to the cytoplasm. The catalysed reaction is hydrogencarbonate + NH4(+) + ATP = carbamoyl phosphate + ADP + H2O + H(+). It functions in the pathway metabolic intermediate metabolism; carbamoyl phosphate degradation; CO(2) and NH(3) from carbamoyl phosphate: step 1/1. This chain is Carbamate kinase 2 (arcC2), found in Staphylococcus aureus (strain Mu50 / ATCC 700699).